The sequence spans 558 residues: Membrane protein insertase YidC (558 aa).

A run of 6 helical transmembrane segments spans residues Ile5–Phe25, Ala332–Phe352, Tyr355–Phe375, Leu429–Ile449, Leu474–Leu494, and Phe520–Trp540.

This sequence belongs to the OXA1/ALB3/YidC family. Type 1 subfamily. In terms of assembly, interacts with the Sec translocase complex via SecD. Specifically interacts with transmembrane segments of nascent integral membrane proteins during membrane integration.

The protein localises to the cell inner membrane. In terms of biological role, required for the insertion and/or proper folding and/or complex formation of integral membrane proteins into the membrane. Involved in integration of membrane proteins that insert both dependently and independently of the Sec translocase complex, as well as at least some lipoproteins. Aids folding of multispanning membrane proteins. The chain is Membrane protein insertase YidC from Rickettsia typhi (strain ATCC VR-144 / Wilmington).